Here is a 129-residue protein sequence, read N- to C-terminus: Large ribosomal subunit protein bL20 (129 aa).

This sequence belongs to the bacterial ribosomal protein bL20 family.

In terms of biological role, binds directly to 23S ribosomal RNA and is necessary for the in vitro assembly process of the 50S ribosomal subunit. It is not involved in the protein synthesizing functions of that subunit. The chain is Large ribosomal subunit protein bL20 from Rhodococcus jostii (strain RHA1).